A 302-amino-acid polypeptide reads, in one-letter code: Polyadenylate-binding protein 2 (302 aa).

The span at 1–12 (MAAAAAAAAAAG) shows a compositional bias: low complexity. Residues 1–111 (MAAAAAAAAA…EADPGDGAIE (111 aa)) form a disordered region. A2 is subject to N-acetylalanine. Residues 2–141 (AAAAAAAAAA…LKELQNEVEK (140 aa)) are interaction with SKIP. The residue at position 17 (R17) is an Omega-N-methylarginine. S19 is subject to Phosphoserine. The span at 30–47 (GAGGEAGEGDPGGAGDYG) shows a compositional bias: gly residues. A compositionally biased stretch (acidic residues) spans 51–68 (ESEELEPGELLPEPEPEE). The residue at position 52 (S52) is a Phosphoserine. Over residues 73-83 (PRAPPGAPGPG) the composition is skewed to pro residues. S91 is modified (phosphoserine). A coiled-coil region spans residues 111-147 (EDPELEAIKARVREMEEEAEKLKELQNEVEKQMNMSP). Residues 115-143 (LEAIKARVREMEEEAEKLKELQNEVEKQM) are stimulates PAPOLA. A phosphoserine mark is found at S146 and S231. One can recognise an RRM domain in the interval 168–245 (RSIYVGNVDY…RQIKVIPKRT (78 aa)). Asymmetric dimethylarginine; alternate occurs at positions 234, 255, and 259. R234, R255, and R259 each carry omega-N-methylarginine; alternate. Residues 255 to 302 (RGFPRSRYRARTTNYNSSRSRFYSGFNSRPRGRIYRGRARATSWYSPY) form a strong poly(A) affinity and self-association region. Asymmetric dimethylarginine is present on residues R261, R263, R265, R273, R275, R283, R285, R287, R290, R292, and R294. Residues 282–302 (SRPRGRIYRGRARATSWYSPY) form an interaction with PAPOLA region.

Monomer and homooligomer. Identified in a IGF2BP1-dependent mRNP granule complex containing untranslated mRNAs. Binds RNA as a monomer and oligomerizes when bound to poly(A). Interacts with PAPOLA, but only in presence of oligo(A) RNA. Interacts with NUDT21/CPSF5 and transportin. Associates in a ternary complex with CPSF4 and NS/NS1 and interaction with NS/NS1, blocks nuclear export of host cell mRNAs. Associates in a single complex with SKIP and MYOD1 and interacts with SKIP in differentiated myocytes. May interact with SETX. Interacts (via RRM domain and C-terminal arginine-rich region) with ZFP36 (via hypophosphorylated form); this interaction occurs in the nucleus in a RNA-independent manner, decreases in presence of single-stranded poly(A) RNA-oligomer and in a p38-dependent-manner and may down-regulated RNA poly(A) polymerase activity. Component of the poly(A) tail exosome targeting (PAXT) complex composed of PABPN1, ZFC3H1 and MTREX. Interacts with ZFC3H1 in a RNase-insensitive manner. Interacts with FRG1. Interacts with ZC3H11A. Arginine dimethylation is asymmetric and involves PRMT1 and PRMT3. It does not influence the RNA binding properties. Ubiquitous.

It is found in the cytoplasm. The protein localises to the nucleus. The protein resides in the nucleus speckle. In terms of biological role, involved in the 3'-end formation of mRNA precursors (pre-mRNA) by the addition of a poly(A) tail of 200-250 nt to the upstream cleavage product. Stimulates poly(A) polymerase (PAPOLA) conferring processivity on the poly(A) tail elongation reaction and also controls the poly(A) tail length. Increases the affinity of poly(A) polymerase for RNA. Is also present at various stages of mRNA metabolism including nucleocytoplasmic trafficking and nonsense-mediated decay (NMD) of mRNA. Cooperates with SKIP to synergistically activate E-box-mediated transcription through MYOD1 and may regulate the expression of muscle-specific genes. Binds to poly(A) and to poly(G) with high affinity. May protect the poly(A) tail from degradation. Subunit of the trimeric poly(A) tail exosome targeting (PAXT) complex, a complex that directs a subset of long and polyadenylated poly(A) RNAs for exosomal degradation. The RNA exosome is fundamental for the degradation of RNA in eukaryotic nuclei. Substrate targeting is facilitated by its cofactor MTREX, which links to RNA-binding protein adapters. The polypeptide is Polyadenylate-binding protein 2 (Pabpn1) (Mus musculus (Mouse)).